A 354-amino-acid polypeptide reads, in one-letter code: Uroporphyrinogen decarboxylase (354 aa).

Substrate is bound by residues 27-31, Asp-77, Tyr-154, Thr-209, and His-327; that span reads RQAGR.

It belongs to the uroporphyrinogen decarboxylase family. As to quaternary structure, homodimer.

It localises to the cytoplasm. The enzyme catalyses uroporphyrinogen III + 4 H(+) = coproporphyrinogen III + 4 CO2. It participates in porphyrin-containing compound metabolism; protoporphyrin-IX biosynthesis; coproporphyrinogen-III from 5-aminolevulinate: step 4/4. Catalyzes the decarboxylation of four acetate groups of uroporphyrinogen-III to yield coproporphyrinogen-III. This is Uroporphyrinogen decarboxylase from Pseudomonas putida (strain ATCC 700007 / DSM 6899 / JCM 31910 / BCRC 17059 / LMG 24140 / F1).